The following is a 458-amino-acid chain: Adenylosuccinate synthetase (458 aa).

Residues 17 to 23 and 45 to 47 each bind GTP; these read GDEGKGK and GHT. The active-site Proton acceptor is Asp-18. 2 residues coordinate Mg(2+): Asp-18 and Gly-45. IMP contacts are provided by residues 18 to 21, 43 to 46, Thr-137, Arg-151, Gln-247, Thr-262, and Arg-330; these read DEGK and NAGH. His-46 serves as the catalytic Proton donor. Residue 326 to 332 participates in substrate binding; it reads VTTGRSR. Residues Arg-332, 358–360, and 440–442 contribute to the GTP site; these read KLD and STS.

The protein belongs to the adenylosuccinate synthetase family. As to quaternary structure, homodimer. Mg(2+) is required as a cofactor.

It localises to the cytoplasm. The catalysed reaction is IMP + L-aspartate + GTP = N(6)-(1,2-dicarboxyethyl)-AMP + GDP + phosphate + 2 H(+). Its pathway is purine metabolism; AMP biosynthesis via de novo pathway; AMP from IMP: step 1/2. Plays an important role in the de novo pathway of purine nucleotide biosynthesis. Catalyzes the first committed step in the biosynthesis of AMP from IMP. The polypeptide is Adenylosuccinate synthetase (Acidovorax sp. (strain JS42)).